A 226-amino-acid polypeptide reads, in one-letter code: 7-cyano-7-deazaguanine synthase (226 aa).

Position 10–20 (10–20) interacts with ATP; it reads FSGGQDSTTLA. The Zn(2+) site is built by cysteine 190, cysteine 205, cysteine 208, and cysteine 211.

Belongs to the QueC family. It depends on Zn(2+) as a cofactor.

The catalysed reaction is 7-carboxy-7-deazaguanine + NH4(+) + ATP = 7-cyano-7-deazaguanine + ADP + phosphate + H2O + H(+). The protein operates within purine metabolism; 7-cyano-7-deazaguanine biosynthesis. Functionally, catalyzes the ATP-dependent conversion of 7-carboxy-7-deazaguanine (CDG) to 7-cyano-7-deazaguanine (preQ(0)). This is 7-cyano-7-deazaguanine synthase from Helicobacter pylori (strain ATCC 700392 / 26695) (Campylobacter pylori).